The primary structure comprises 473 residues: Rop guanine nucleotide exchange factor 3 (473 aa).

Residues 1–28 are disordered; sequence MENLSNPDENDDHQSPRSIDQNDQSAVE. Residues 16–28 are compositionally biased toward polar residues; it reads PRSIDQNDQSAVE. Residues 95–473 enclose the PRONE domain; it reads LVVQEISEPE…YVDKTMRGSE (379 aa).

In terms of biological role, guanine-nucleotide exchange factor (GEF) that acts as an activator of Rop (Rho of plants) GTPases by promoting the exchange of GDP for GTP. The sequence is that of Rop guanine nucleotide exchange factor 3 (ROPGEF3) from Arabidopsis thaliana (Mouse-ear cress).